A 73-amino-acid polypeptide reads, in one-letter code: uncharacterized protein (73 aa).

This is an uncharacterized protein from Vaccinia virus (strain Copenhagen) (VACV).